The following is a 211-amino-acid chain: MTSQRTRERLIQRLCEEGISNQRVLDVIRKTPRHLFVDEALAHRAYEDTALPIGHNQTISQPYMVARMSELLLAAGPLDKVMEIGTGSGYQTAVLAQLVERVFSVERIKVLQDRAKERLVELNLRNVVFRWGDGWEGWPALAPYNGIIVTAVATDVPQALLDQLAPGGRLVIPVGSGEVQQLMLIIREENGFSRHVLGAVRFVPLLNGPIA.

The active site involves S60.

It belongs to the methyltransferase superfamily. L-isoaspartyl/D-aspartyl protein methyltransferase family.

The protein localises to the cytoplasm. It catalyses the reaction [protein]-L-isoaspartate + S-adenosyl-L-methionine = [protein]-L-isoaspartate alpha-methyl ester + S-adenosyl-L-homocysteine. Catalyzes the methyl esterification of L-isoaspartyl residues in peptides and proteins that result from spontaneous decomposition of normal L-aspartyl and L-asparaginyl residues. It plays a role in the repair and/or degradation of damaged proteins. In Pseudomonas savastanoi pv. phaseolicola (strain 1448A / Race 6) (Pseudomonas syringae pv. phaseolicola (strain 1448A / Race 6)), this protein is Protein-L-isoaspartate O-methyltransferase.